The chain runs to 451 residues: Trimethylamine monooxygenase (451 aa).

Positions 12, 37, 39, 45, 46, and 62 each coordinate FAD. NADP(+)-binding residues include tryptophan 70 and asparagine 72. Positions 72 and 125 each coordinate FAD. Residues serine 204, serine 205, serine 207, and arginine 228 each contribute to the NADP(+) site. Residues glutamine 317 and threonine 320 each contribute to the FAD site. Arginine 411 provides a ligand contact to NADP(+).

This sequence belongs to the FMO family. It depends on FAD as a cofactor.

The catalysed reaction is trimethylamine + NADPH + O2 = trimethylamine N-oxide + NADP(+) + H2O. In terms of biological role, catalyzes the oxidation of trimethylamine (TMA) to produce trimethylamine N-oxide (TMAO). In vitro, has a broad substrate specificity, oxidizing many nitrogen- and sulfur-containing compounds, including dimethylamine (DMA), dimethylsulfide (DMS), dimethylsulfoxide (DMSO), cysteamine, methimazole and dimethylaniline. This chain is Trimethylamine monooxygenase, found in Methylocella silvestris (strain DSM 15510 / CIP 108128 / LMG 27833 / NCIMB 13906 / BL2).